Here is a 160-residue protein sequence, read N- to C-terminus: Cytochrome b6-f complex subunit 4 (160 aa).

A run of 3 helical transmembrane segments spans residues 36–56 (LLYI…GLAV), 95–115 (LLGV…PFLE), and 131–151 (TVFL…ALPI).

The protein belongs to the cytochrome b family. PetD subfamily. As to quaternary structure, the 4 large subunits of the cytochrome b6-f complex are cytochrome b6, subunit IV (17 kDa polypeptide, petD), cytochrome f and the Rieske protein, while the 4 small subunits are petG, petL, petM and petN. The complex functions as a dimer.

The protein resides in the plastid. Its subcellular location is the chloroplast thylakoid membrane. In terms of biological role, component of the cytochrome b6-f complex, which mediates electron transfer between photosystem II (PSII) and photosystem I (PSI), cyclic electron flow around PSI, and state transitions. The chain is Cytochrome b6-f complex subunit 4 from Physcomitrium patens (Spreading-leaved earth moss).